Consider the following 76-residue polypeptide: Small ribosomal subunit protein bS16 (76 aa).

The protein belongs to the bacterial ribosomal protein bS16 family.

This is Small ribosomal subunit protein bS16 from Helicobacter acinonychis (strain Sheeba).